Reading from the N-terminus, the 677-residue chain is DNA ligase (677 aa).

NAD(+)-binding positions include 32 to 36 (DAQYD), 81 to 82 (SL), and Glu112. Lys114 serves as the catalytic N6-AMP-lysine intermediate. Positions 135, 171, 288, and 312 each coordinate NAD(+). 4 residues coordinate Zn(2+): Cys416, Cys419, Cys434, and Cys439. The BRCT domain occupies 598-677 (NKNMPFSGME…REFINMLEQS (80 aa)).

It belongs to the NAD-dependent DNA ligase family. LigA subfamily. Mg(2+) is required as a cofactor. Requires Mn(2+) as cofactor.

The catalysed reaction is NAD(+) + (deoxyribonucleotide)n-3'-hydroxyl + 5'-phospho-(deoxyribonucleotide)m = (deoxyribonucleotide)n+m + AMP + beta-nicotinamide D-nucleotide.. In terms of biological role, DNA ligase that catalyzes the formation of phosphodiester linkages between 5'-phosphoryl and 3'-hydroxyl groups in double-stranded DNA using NAD as a coenzyme and as the energy source for the reaction. It is essential for DNA replication and repair of damaged DNA. The sequence is that of DNA ligase from Dehalococcoides mccartyi (strain CBDB1).